Consider the following 221-residue polypeptide: Type II secretion system protein J (221 aa).

Residues 1 to 15 constitute a propeptide, leader sequence; the sequence is MWRTNQVSSRQNMAG. An N-methylphenylalanine modification is found at Phe16. The chain crosses the membrane as a helical span at residues 16–36; sequence FTLIEVLVAIAIFASLSVGAY.

The protein belongs to the GSP J family. As to quaternary structure, type II secretion is composed of four main components: the outer membrane complex, the inner membrane complex, the cytoplasmic secretion ATPase and the periplasm-spanning pseudopilus. Interacts with core component epsG. Cleaved by prepilin peptidase. Post-translationally, methylated by prepilin peptidase at the amino group of the N-terminal phenylalanine once the leader sequence is cleaved by prepilin peptidase.

Its subcellular location is the cell inner membrane. Functionally, component of the type II secretion system required for the energy-dependent secretion of extracellular factors such as proteases and toxins from the periplasm. Part of the pseudopilus tip complex that is critical for the recognition and binding of secretion substrates. The polypeptide is Type II secretion system protein J (epsJ) (Vibrio cholerae serotype O1 (strain ATCC 39315 / El Tor Inaba N16961)).